Here is a 121-residue protein sequence, read N- to C-terminus: Small ribosomal subunit protein uS13 (121 aa).

Residues 92–121 (RKGLPVRGQRTKTNARTRKGPRKSGVQLKK) are disordered.

This sequence belongs to the universal ribosomal protein uS13 family. Part of the 30S ribosomal subunit. Forms a loose heterodimer with protein S19. Forms two bridges to the 50S subunit in the 70S ribosome.

Functionally, located at the top of the head of the 30S subunit, it contacts several helices of the 16S rRNA. In the 70S ribosome it contacts the 23S rRNA (bridge B1a) and protein L5 of the 50S subunit (bridge B1b), connecting the 2 subunits; these bridges are implicated in subunit movement. Contacts the tRNAs in the A and P-sites. This Polynucleobacter asymbioticus (strain DSM 18221 / CIP 109841 / QLW-P1DMWA-1) (Polynucleobacter necessarius subsp. asymbioticus) protein is Small ribosomal subunit protein uS13.